The primary structure comprises 590 residues: G protein-coupled receptor kinase 5 (590 aa).

The segment at 1-185 (MELENIVANT…LERQPVTKNT (185 aa)) is N-terminal. Positions 20-39 (GGKRKGKSKKWKEILKFPHI) are interaction with calmodulin. The region spanning 53-171 (YCSLCDKQPI…LDSMFFDRFL (119 aa)) is the RGS domain. A Protein kinase domain is found at 186–448 (FRQYRVLGKG…AAEVKRHPFF (263 aa)). Residues 192-200 (LGKGGFGEV) and K215 each bind ATP. D311 (proton acceptor) is an active-site residue. The Nuclear localization signal motif lies at 388 to 395 (RKEKVKRE). One can recognise an AGC-kinase C-terminal domain in the interval 449-514 (RNMNFKRLEA…GSVSIPWQNE (66 aa)). At S484 the chain carries Phosphoserine; by autocatalysis. At T485 the chain carries Phosphothreonine; by autocatalysis. A disordered region spans residues 531-590 (GTLPPDLNRNHPPEPPKKGLLQRLFKRQHQNNSKSSPSSKTSFNHHINSNHVSSNSTGSS). The segment covering 538–547 (NRNHPPEPPK) has biased composition (basic and acidic residues). Residues 546-565 (PKKGLLQRLFKRQHQNNSKS) are sufficient for membrane localization. Residues 563–590 (SKSSPSSKTSFNHHINSNHVSSNSTGSS) are compositionally biased toward low complexity. Position 579 is a phosphoserine (S579).

This sequence belongs to the protein kinase superfamily. AGC Ser/Thr protein kinase family. GPRK subfamily. As to quaternary structure, interacts with ST13 (via the C-terminus 303-319 AA). Interacts with TP53/p53. Interacts with HTR4 (via C-terminus 330-346 AA); this interaction is promoted by 5-HT (serotonin). Interacts with HDAC5. Interacts with GIT1. Post-translationally, autophosphorylated. Autophosphorylation may play a critical role in the regulation of GRK5 kinase activity. As to expression, highest levels in heart, placenta, lung &gt; skeletal muscle &gt; brain, liver, pancreas &gt; kidney.

The protein resides in the cytoplasm. It is found in the nucleus. It localises to the cell membrane. The catalysed reaction is [G-protein-coupled receptor] + ATP = [G-protein-coupled receptor]-phosphate + ADP + H(+). Inhibited by calmodulin with an IC(50) of 50 nM. Calmodulin inhibits GRK5 association with receptor and phospholipid. In terms of biological role, serine/threonine kinase that phosphorylates preferentially the activated forms of a variety of G-protein-coupled receptors (GPCRs). Such receptor phosphorylation initiates beta-arrestin-mediated receptor desensitization, internalization, and signaling events leading to their down-regulation. Phosphorylates a variety of GPCRs, including adrenergic receptors, muscarinic acetylcholine receptors (more specifically Gi-coupled M2/M4 subtypes), dopamine receptors and opioid receptors. In addition to GPCRs, also phosphorylates various substrates: Hsc70-interacting protein/ST13, TP53/p53, HDAC5, and arrestin-1/ARRB1. Phosphorylation of ARRB1 by GRK5 inhibits G-protein independent MAPK1/MAPK3 signaling downstream of 5HT4-receptors. Phosphorylation of HDAC5, a repressor of myocyte enhancer factor 2 (MEF2) leading to nuclear export of HDAC5 and allowing MEF2-mediated transcription. Phosphorylation of TP53/p53, a crucial tumor suppressor, inhibits TP53/p53-mediated apoptosis. Phosphorylation of ST13 regulates internalization of the chemokine receptor. Phosphorylates rhodopsin (RHO) (in vitro) and a non G-protein-coupled receptor, LRP6 during Wnt signaling (in vitro). This is G protein-coupled receptor kinase 5 (GRK5) from Homo sapiens (Human).